The sequence spans 195 residues: NADH-ubiquinone oxidoreductase subunit 9 (195 aa).

It belongs to the complex I 30 kDa subunit family. As to quaternary structure, complex I is composed of about 30 different subunits.

Its subcellular location is the mitochondrion inner membrane. The enzyme catalyses a ubiquinone + NADH + 5 H(+)(in) = a ubiquinol + NAD(+) + 4 H(+)(out). Core subunit of the mitochondrial membrane respiratory chain NADH dehydrogenase (Complex I) that is believed to belong to the minimal assembly required for catalysis. Complex I functions in the transfer of electrons from NADH to the respiratory chain. The immediate electron acceptor for the enzyme is believed to be ubiquinone. The polypeptide is NADH-ubiquinone oxidoreductase subunit 9 (NAD9) (Acanthamoeba castellanii (Amoeba)).